The primary structure comprises 130 residues: Peptide methionine sulfoxide reductase MsrB (130 aa).

The 123-residue stretch at 8-130 folds into the MsrB domain; that stretch reads LEEWRSMLDP…NSVCLDLVPR (123 aa). Residues C47, C50, C96, and C99 each contribute to the Zn(2+) site. The active-site Nucleophile is the C119.

Belongs to the MsrB Met sulfoxide reductase family. The cofactor is Zn(2+).

It carries out the reaction L-methionyl-[protein] + [thioredoxin]-disulfide + H2O = L-methionyl-(R)-S-oxide-[protein] + [thioredoxin]-dithiol. This chain is Peptide methionine sulfoxide reductase MsrB, found in Pseudomonas fluorescens (strain ATCC BAA-477 / NRRL B-23932 / Pf-5).